A 146-amino-acid chain; its full sequence is VHLTGEEKAAVTSLWGKVNVDEVGGEALGRLLVVYPWTQRFFDSFGDLSSPDAVMGNPKVKAHGKKVLNSFSEGLKNLDNLKGTFAKLSELHCDKLHVDPENFKLLGNVLVCVLAHHFGKEFTPQVQAAYQKVVAGVANALAHKYH.

Residue Val1 is modified to N-acetylvaline. Residues 2–146 enclose the Globin domain; the sequence is HLTGEEKAAV…VANALAHKYH (145 aa). Residue Thr12 is modified to Phosphothreonine. At Ser44 the chain carries Phosphoserine. Residue Lys59 is modified to N6-acetyllysine. Residue His63 coordinates heme b. Residue Lys82 is modified to N6-acetyllysine. A heme b-binding site is contributed by His92. Cys93 carries the post-translational modification S-nitrosocysteine. An N6-acetyllysine modification is found at Lys144.

This sequence belongs to the globin family. Heterotetramer of two alpha chains and two beta chains. As to expression, red blood cells.

Involved in oxygen transport from the lung to the various peripheral tissues. In Lutra lutra (European river otter), this protein is Hemoglobin subunit beta (HBB).